A 142-amino-acid polypeptide reads, in one-letter code: Large ribosomal subunit protein uL13 (142 aa).

Belongs to the universal ribosomal protein uL13 family. In terms of assembly, part of the 50S ribosomal subunit.

Functionally, this protein is one of the early assembly proteins of the 50S ribosomal subunit, although it is not seen to bind rRNA by itself. It is important during the early stages of 50S assembly. This chain is Large ribosomal subunit protein uL13, found in Shewanella oneidensis (strain ATCC 700550 / JCM 31522 / CIP 106686 / LMG 19005 / NCIMB 14063 / MR-1).